Consider the following 97-residue polypeptide: Antitoxin YafN (97 aa).

Belongs to the phD/YefM antitoxin family. Probably forms a complex with the mRNA interferase YafO which inhibits the mRNA interferase activity.

Antitoxin component of a type II toxin-antitoxin (TA) system. Functions as an mRNA interferase antitoxin; overexpression prevents YafO-mediated cessation of cell growth and inhibition of cell proliferation. This chain is Antitoxin YafN (yafN), found in Escherichia coli (strain K12).